Consider the following 160-residue polypeptide: Phosphopantetheine adenylyltransferase (160 aa).

Residue S8 coordinates substrate. Residues 8 to 9 (SF) and H16 contribute to the ATP site. The substrate site is built by K40, L74, and K88. ATP contacts are provided by residues 89-91 (GLR), E99, and 124-130 (YSFVSST).

Belongs to the bacterial CoaD family. As to quaternary structure, homohexamer. Mg(2+) serves as cofactor.

It is found in the cytoplasm. It carries out the reaction (R)-4'-phosphopantetheine + ATP + H(+) = 3'-dephospho-CoA + diphosphate. The protein operates within cofactor biosynthesis; coenzyme A biosynthesis; CoA from (R)-pantothenate: step 4/5. Functionally, reversibly transfers an adenylyl group from ATP to 4'-phosphopantetheine, yielding dephospho-CoA (dPCoA) and pyrophosphate. The protein is Phosphopantetheine adenylyltransferase of Thermus thermophilus (strain ATCC BAA-163 / DSM 7039 / HB27).